We begin with the raw amino-acid sequence, 216 residues long: Ribosomal RNA small subunit methyltransferase G (216 aa).

S-adenosyl-L-methionine is bound by residues Gly83, Met88, 134–135 (VE), and Arg149.

This sequence belongs to the methyltransferase superfamily. RNA methyltransferase RsmG family.

The protein resides in the cytoplasm. The enzyme catalyses guanosine(527) in 16S rRNA + S-adenosyl-L-methionine = N(7)-methylguanosine(527) in 16S rRNA + S-adenosyl-L-homocysteine. Functionally, specifically methylates the N7 position of guanine in position 527 of 16S rRNA. This is Ribosomal RNA small subunit methyltransferase G from Pseudomonas putida (strain GB-1).